The sequence spans 115 residues: MRVGCDIIAISRIEKIHSRHGKNFLDKFLSPKEQILIKNPATLAGLWAAKEAASKALGVGICELCSFFDIEISKDEKNAPKLKYSQKITKDFNITQTSLSISHDNGFAIAIVAVV.

Residues aspartate 6 and glutamate 51 each contribute to the Mg(2+) site.

This sequence belongs to the P-Pant transferase superfamily. AcpS family. Mg(2+) is required as a cofactor.

The protein resides in the cytoplasm. The catalysed reaction is apo-[ACP] + CoA = holo-[ACP] + adenosine 3',5'-bisphosphate + H(+). Functionally, transfers the 4'-phosphopantetheine moiety from coenzyme A to a Ser of acyl-carrier-protein. In Campylobacter jejuni (strain RM1221), this protein is Holo-[acyl-carrier-protein] synthase.